A 145-amino-acid chain; its full sequence is Large ribosomal subunit protein uL15 (145 aa).

The segment at 1–52 (MKLNTIAPAEGSKKDRRRVGRGIGSGFGKTAGRGHKGQHARSGGYHKVGFEG) is disordered. A compositionally biased stretch (gly residues) spans 21–31 (RGIGSGFGKTA).

This sequence belongs to the universal ribosomal protein uL15 family. As to quaternary structure, part of the 50S ribosomal subunit.

Its function is as follows. Binds to the 23S rRNA. This Acidithiobacillus ferrooxidans (strain ATCC 53993 / BNL-5-31) (Leptospirillum ferrooxidans (ATCC 53993)) protein is Large ribosomal subunit protein uL15.